Reading from the N-terminus, the 302-residue chain is Orotidine 5'-phosphate decarboxylase (302 aa).

The active-site Proton donor is Lys105.

The protein belongs to the OMP decarboxylase family. Type 2 subfamily.

It catalyses the reaction orotidine 5'-phosphate + H(+) = UMP + CO2. Its pathway is pyrimidine metabolism; UMP biosynthesis via de novo pathway; UMP from orotate: step 2/2. This is Orotidine 5'-phosphate decarboxylase from Rhodopirellula baltica (strain DSM 10527 / NCIMB 13988 / SH1).